Here is a 481-residue protein sequence, read N- to C-terminus: 2-succinylbenzoate--CoA ligase (481 aa).

This sequence belongs to the ATP-dependent AMP-binding enzyme family. MenE subfamily.

It catalyses the reaction 2-succinylbenzoate + ATP + CoA = 2-succinylbenzoyl-CoA + AMP + diphosphate. It participates in quinol/quinone metabolism; 1,4-dihydroxy-2-naphthoate biosynthesis; 1,4-dihydroxy-2-naphthoate from chorismate: step 5/7. Its pathway is quinol/quinone metabolism; menaquinone biosynthesis. In terms of biological role, converts 2-succinylbenzoate (OSB) to 2-succinylbenzoyl-CoA (OSB-CoA). The polypeptide is 2-succinylbenzoate--CoA ligase (Bacillus mycoides (strain KBAB4) (Bacillus weihenstephanensis)).